The chain runs to 145 residues: Putative pre-16S rRNA nuclease (145 aa).

Belongs to the YqgF nuclease family.

It localises to the cytoplasm. In terms of biological role, could be a nuclease involved in processing of the 5'-end of pre-16S rRNA. The chain is Putative pre-16S rRNA nuclease from Pseudomonas fluorescens (strain ATCC BAA-477 / NRRL B-23932 / Pf-5).